Here is a 692-residue protein sequence, read N- to C-terminus: Elongation factor G (692 aa).

Residues 8–282 (AKTRNIGIMA…AVIAYLPSPL (275 aa)) form the tr-type G domain. Residues 17–24 (AHVDAGKT), 81–85 (DTPGH), and 135–138 (NKMD) each bind GTP.

This sequence belongs to the TRAFAC class translation factor GTPase superfamily. Classic translation factor GTPase family. EF-G/EF-2 subfamily.

Its subcellular location is the cytoplasm. Catalyzes the GTP-dependent ribosomal translocation step during translation elongation. During this step, the ribosome changes from the pre-translocational (PRE) to the post-translocational (POST) state as the newly formed A-site-bound peptidyl-tRNA and P-site-bound deacylated tRNA move to the P and E sites, respectively. Catalyzes the coordinated movement of the two tRNA molecules, the mRNA and conformational changes in the ribosome. This Streptococcus pyogenes serotype M49 (strain NZ131) protein is Elongation factor G.